We begin with the raw amino-acid sequence, 326 residues long: Guanine nucleotide-binding protein subunit beta-like protein 1 (326 aa).

6 WD repeats span residues 17 to 61 (GTQS…IVTT), 64 to 104 (GHGG…NTIM), 159 to 202 (ARPG…VCSQ), 205 to 244 (CHEE…SLQV), 250 to 291 (LTNP…AVLA), and 292 to 325 (FHSA…LYPC).

As to expression, expressed at low levels in most tissues and highly expressed in adult testis. Widely expressed in adult brain with striking regional distribution in forebrain, midbrain, and hindbrain structures, including the thalamus, hypothalamus, amygdala, hippocampus, pons.

Its subcellular location is the cytoplasm. It localises to the nucleus. Functionally, acts as a critical regulator of DNA damage response (DDR) signaling via specifically regulating phosphatidylinositol 3-kinase-related protein kinase (PIKK) family proteins. This is Guanine nucleotide-binding protein subunit beta-like protein 1 (Gnb1l) from Mus musculus (Mouse).